We begin with the raw amino-acid sequence, 447 residues long: Tubulin beta chain (447 aa).

GTP is bound by residues Q11, E69, S138, G142, T143, G144, N204, and N226. E69 contributes to the Mg(2+) binding site.

The protein belongs to the tubulin family. Dimer of alpha and beta chains. A typical microtubule is a hollow water-filled tube with an outer diameter of 25 nm and an inner diameter of 15 nM. Alpha-beta heterodimers associate head-to-tail to form protofilaments running lengthwise along the microtubule wall with the beta-tubulin subunit facing the microtubule plus end conferring a structural polarity. Microtubules usually have 13 protofilaments but different protofilament numbers can be found in some organisms and specialized cells. Requires Mg(2+) as cofactor.

The protein resides in the cytoplasm. Its subcellular location is the cytoskeleton. Functionally, tubulin is the major constituent of microtubules, a cylinder consisting of laterally associated linear protofilaments composed of alpha- and beta-tubulin heterodimers. Microtubules grow by the addition of GTP-tubulin dimers to the microtubule end, where a stabilizing cap forms. Below the cap, tubulin dimers are in GDP-bound state, owing to GTPase activity of alpha-tubulin. The sequence is that of Tubulin beta chain from Trichophyton rubrum (Athlete's foot fungus).